The following is a 246-amino-acid chain: UDP-N-acetyl-D-mannosaminuronic acid transferase (246 aa).

Belongs to the glycosyltransferase 26 family.

The enzyme catalyses UDP-N-acetyl-alpha-D-mannosaminouronate + N-acetyl-alpha-D-glucosaminyl-di-trans,octa-cis-undecaprenyl diphosphate = beta-D-ManNAcA-(1-&gt;4)-alpha-D-GlcNAc-di-trans,octa-cis-undecaprenyl diphosphate + UDP + H(+). It functions in the pathway bacterial outer membrane biogenesis; enterobacterial common antigen biosynthesis. Functionally, catalyzes the synthesis of Und-PP-GlcNAc-ManNAcA (Lipid II), the second lipid-linked intermediate involved in enterobacterial common antigen (ECA) synthesis. The polypeptide is UDP-N-acetyl-D-mannosaminuronic acid transferase (Escherichia coli O1:K1 / APEC).